The chain runs to 739 residues: Phosphoribosylformylglycinamidine synthase subunit PurL (739 aa).

His54 is an active-site residue. ATP-binding residues include Tyr57 and Lys96. Glu98 serves as a coordination point for Mg(2+). Substrate contacts are provided by residues 99–102 (SHNH) and Arg121. The active-site Proton acceptor is His100. Residue Asp122 participates in Mg(2+) binding. Gln245 lines the substrate pocket. Asp275 provides a ligand contact to Mg(2+). 319–321 (ESQ) contributes to the substrate binding site. Positions 504 and 541 each coordinate ATP. Asn542 is a Mg(2+) binding site. Ser544 provides a ligand contact to substrate.

Belongs to the FGAMS family. In terms of assembly, monomer. Part of the FGAM synthase complex composed of 1 PurL, 1 PurQ and 2 PurS subunits.

Its subcellular location is the cytoplasm. The enzyme catalyses N(2)-formyl-N(1)-(5-phospho-beta-D-ribosyl)glycinamide + L-glutamine + ATP + H2O = 2-formamido-N(1)-(5-O-phospho-beta-D-ribosyl)acetamidine + L-glutamate + ADP + phosphate + H(+). It functions in the pathway purine metabolism; IMP biosynthesis via de novo pathway; 5-amino-1-(5-phospho-D-ribosyl)imidazole from N(2)-formyl-N(1)-(5-phospho-D-ribosyl)glycinamide: step 1/2. Its function is as follows. Part of the phosphoribosylformylglycinamidine synthase complex involved in the purines biosynthetic pathway. Catalyzes the ATP-dependent conversion of formylglycinamide ribonucleotide (FGAR) and glutamine to yield formylglycinamidine ribonucleotide (FGAM) and glutamate. The FGAM synthase complex is composed of three subunits. PurQ produces an ammonia molecule by converting glutamine to glutamate. PurL transfers the ammonia molecule to FGAR to form FGAM in an ATP-dependent manner. PurS interacts with PurQ and PurL and is thought to assist in the transfer of the ammonia molecule from PurQ to PurL. This Lactococcus lactis subsp. cremoris (Streptococcus cremoris) protein is Phosphoribosylformylglycinamidine synthase subunit PurL.